Here is a 155-residue protein sequence, read N- to C-terminus: Small ribosomal subunit protein uS7 (155 aa).

The protein belongs to the universal ribosomal protein uS7 family. Part of the 30S ribosomal subunit. Contacts proteins S9 and S11.

Its function is as follows. One of the primary rRNA binding proteins, it binds directly to 16S rRNA where it nucleates assembly of the head domain of the 30S subunit. Is located at the subunit interface close to the decoding center, probably blocks exit of the E-site tRNA. The sequence is that of Small ribosomal subunit protein uS7 from Fervidobacterium nodosum (strain ATCC 35602 / DSM 5306 / Rt17-B1).